The following is a 1408-amino-acid chain: MSNSMRDLISGEAELDDEEEDESFDERGGQRRHKNAVEDSSEEEEDDDDEEEARKVREGFIVDEDEDEDEGGESDADVRPLHKRKREHRDREEEAQLDEDDLDLIGEQFGERPKPTTQSKFKRLKRGTRDEDRGNQRRGLDDIFSDEEDDAGEQRAYNNRSSYRQADEFDDFIEEDFPDDPEELEQQREDAEVARPRDRVIGNIADTANLDKDALDDMEAIFGNGEDYDWALQMEEEEEDREREEQAIELKDVFEPSQLKEKLLTDEDNEIRFTDEPERFQIDRKTFKSLQLTAEQFKEEARWITNQLWPKKGLASDLQSPFGKAVGKVLEFFIVDEVEVPYVFQHRKDYLLHTRKTRNPNRDDPDAPEYVISADKLLNQDDLWKILELDIKFRSFVDKRNALEKTVDNLKGMEIHDAMVDEMIPEATTMEELQDLQDYLHFQYGQQLKDLAALAGNLSLTKRPGSKSNLLERVRQGKAYGFVRAYGISADQLAKNALRHGKKVTPDDDAQYPMDLADSLIDDVFSTGDQVISAARQMYSEELFASPRMRKHFRNSYYQAAEISCRRTEKGLRRIDDSHPYYEIKYLQNQAIADLVHQPELFLKMMKAEEEGLVTIKLDMPARYDFRQHLYQEFESENFSDRAEQWREERKKVLDLAYPKLEKIIAKNVKEVIRTFCQDEVLKMCREEYAKRLDQAPYKPKGMILGTTPRVLVLSNGMSDPARDPICWAWVEEDGRVIEQGKLGNLARDERQREEFEELVKRRRPDVIGVSGWSAETTKLVRDLEGLVNEKGLMGPEFEDPDTNDYRTEPLEVVVVNDEVARLYKDSPRALAEHPSLNPITRYCVALARYMQNPMKEYAALGKDVSSLSYHPCQNLLPADKLAKYLDSAMVDMVNLCGVDINEAMNDTYTANLLPYVSGLGPRKATSVIKAINANGGAVGTRDELVGDPDSGKLPVVGPRVWNNCASFLFIEYEATNPSSDPLDNTRVHPEDYELGRKMAADALELDEEDVKGETDENGPGAIVRKLFKMDEQDKVNELVLEEYAEQLERNYSQRKRATLETIRAELQAPYEELRRNFALLSASEIFTMFTGETKHTLCEGMIVPVNVRVVKDDFAIVKLDCGIEGRVEGHEVSHRSSIKEVLSSGQTSQAKILDINYKDFMAKLSMREDALRIPYKRPINLGRDGWDYVLEAADKEELREKDKTTGRTQRVVKHPNFKPFNGLQAEEYLGSQPNGEVVIRPSSKGNDHLAVTWKVADGVFQHIDVLEMQKETEFAVGKLLRVGGKYTYTDLDELIVEHVKAMARKVEELMRHDKYQNRSRGETEKWLTTYIDANPNRSTYAFCIDTKHPGYFWLCFKASRAAKVIALPVRAIPQGFELKGYQYPDMRALCNGFKLRYQNEFSKMGQR.

The disordered stretch occupies residues 1-199 (MSNSMRDLIS…DAEVARPRDR (199 aa)). Composition is skewed to acidic residues over residues 13 to 24 (AELDDEEEDESF), 39 to 51 (DSSE…DDEE), 61 to 75 (IVDE…GESD), and 95 to 104 (AQLDEDDLDL). A compositionally biased stretch (basic and acidic residues) spans 127 to 141 (GTRDEDRGNQRRGLD). Over residues 168–184 (EFDDFIEEDFPDDPEEL) the composition is skewed to acidic residues. Basic and acidic residues predominate over residues 185-199 (EQQREDAEVARPRDR). Residues 1101 to 1168 (GMIVPVNVRV…KDFMAKLSMR (68 aa)) enclose the S1 motif domain. The 102-residue stretch at 1213 to 1314 (VKHPNFKPFN…RKVEELMRHD (102 aa)) folds into the SH2 domain.

Belongs to the SPT6 family.

It localises to the nucleus. It is found in the chromosome. Functionally, histone H3-H4 chaperone that plays a role in maintenance of chromatin structure during RNA polymerase II transcription elongation thereby repressing transcription initiation from cryptic promoters. Mediates the reassembly of nucleosomes onto the promoters of at least a selected set of genes during repression; the nucleosome reassembly is essential for transcriptional repression. Essential for viability. The chain is Transcription elongation factor SPT6 (SPT6) from Gibberella zeae (strain ATCC MYA-4620 / CBS 123657 / FGSC 9075 / NRRL 31084 / PH-1) (Wheat head blight fungus).